The primary structure comprises 416 residues: Gamma-glutamyl phosphate reductase (416 aa).

Belongs to the gamma-glutamyl phosphate reductase family.

Its subcellular location is the cytoplasm. The catalysed reaction is L-glutamate 5-semialdehyde + phosphate + NADP(+) = L-glutamyl 5-phosphate + NADPH + H(+). Its pathway is amino-acid biosynthesis; L-proline biosynthesis; L-glutamate 5-semialdehyde from L-glutamate: step 2/2. In terms of biological role, catalyzes the NADPH-dependent reduction of L-glutamate 5-phosphate into L-glutamate 5-semialdehyde and phosphate. The product spontaneously undergoes cyclization to form 1-pyrroline-5-carboxylate. The polypeptide is Gamma-glutamyl phosphate reductase (Streptococcus pyogenes serotype M3 (strain ATCC BAA-595 / MGAS315)).